We begin with the raw amino-acid sequence, 755 residues long: Xaa-Pro dipeptidyl-peptidase (755 aa).

Active-site charge relay system residues include S348, D468, and H498.

The protein belongs to the peptidase S15 family. As to quaternary structure, homodimer.

The protein localises to the cytoplasm. It carries out the reaction Hydrolyzes Xaa-Pro-|- bonds to release unblocked, N-terminal dipeptides from substrates including Ala-Pro-|-p-nitroanilide and (sequentially) Tyr-Pro-|-Phe-Pro-|-Gly-Pro-|-Ile.. Functionally, removes N-terminal dipeptides sequentially from polypeptides having unsubstituted N-termini provided that the penultimate residue is proline. The sequence is that of Xaa-Pro dipeptidyl-peptidase from Streptococcus thermophilus.